Reading from the N-terminus, the 101-residue chain is NAD(P)H-quinone oxidoreductase subunit 4L (101 aa).

3 helical membrane-spanning segments follow: residues 3-23 (LRYFLLLAAALFCIGIYGLIT), 30-50 (VLMSIELLLNAVNLNLMAFSN), and 64-84 (VFVITVAAAEAAVGLAIVLAI).

The protein belongs to the complex I subunit 4L family. In terms of assembly, NDH-1 can be composed of about 15 different subunits; different subcomplexes with different compositions have been identified which probably have different functions.

Its subcellular location is the cellular thylakoid membrane. It catalyses the reaction a plastoquinone + NADH + (n+1) H(+)(in) = a plastoquinol + NAD(+) + n H(+)(out). It carries out the reaction a plastoquinone + NADPH + (n+1) H(+)(in) = a plastoquinol + NADP(+) + n H(+)(out). Functionally, NDH-1 shuttles electrons from an unknown electron donor, via FMN and iron-sulfur (Fe-S) centers, to quinones in the respiratory and/or the photosynthetic chain. The immediate electron acceptor for the enzyme in this species is believed to be plastoquinone. Couples the redox reaction to proton translocation, and thus conserves the redox energy in a proton gradient. Cyanobacterial NDH-1 also plays a role in inorganic carbon-concentration. The polypeptide is NAD(P)H-quinone oxidoreductase subunit 4L (Nostoc sp. (strain PCC 7120 / SAG 25.82 / UTEX 2576)).